The sequence spans 480 residues: Cysteine--tRNA ligase (480 aa).

Cys-29 serves as a coordination point for Zn(2+). The 'HIGH' region motif lies at 31-41 (PTVYADPHLGH). Residues Cys-220, His-245, and Glu-249 each contribute to the Zn(2+) site. The 'KMSKS' region signature appears at 276 to 280 (KMAKS). Residue Lys-279 participates in ATP binding.

This sequence belongs to the class-I aminoacyl-tRNA synthetase family. As to quaternary structure, monomer. The cofactor is Zn(2+).

The protein localises to the cytoplasm. It catalyses the reaction tRNA(Cys) + L-cysteine + ATP = L-cysteinyl-tRNA(Cys) + AMP + diphosphate. In Thermus thermophilus (strain ATCC 27634 / DSM 579 / HB8), this protein is Cysteine--tRNA ligase.